Here is a 331-residue protein sequence, read N- to C-terminus: Adenosine deaminase (331 aa).

Zn(2+) contacts are provided by His-12 and His-14. Residues His-14, Asp-16, and Gly-170 each coordinate substrate. Residue His-197 participates in Zn(2+) binding. The Proton donor role is filled by Glu-200. Position 278 (Asp-278) interacts with Zn(2+).

It belongs to the metallo-dependent hydrolases superfamily. Adenosine and AMP deaminases family. Adenosine deaminase subfamily. The cofactor is Zn(2+).

The enzyme catalyses adenosine + H2O + H(+) = inosine + NH4(+). It catalyses the reaction 2'-deoxyadenosine + H2O + H(+) = 2'-deoxyinosine + NH4(+). Functionally, catalyzes the hydrolytic deamination of adenosine and 2-deoxyadenosine. The chain is Adenosine deaminase from Clostridium botulinum (strain 657 / Type Ba4).